A 301-amino-acid chain; its full sequence is Glycine--tRNA ligase alpha subunit (301 aa).

It belongs to the class-II aminoacyl-tRNA synthetase family. As to quaternary structure, tetramer of two alpha and two beta subunits.

The protein localises to the cytoplasm. The enzyme catalyses tRNA(Gly) + glycine + ATP = glycyl-tRNA(Gly) + AMP + diphosphate. The polypeptide is Glycine--tRNA ligase alpha subunit (Shewanella frigidimarina (strain NCIMB 400)).